The primary structure comprises 152 residues: Transcriptional regulator MraZ (152 aa).

SpoVT-AbrB domains lie at 5–52 (ATLV…PLPE) and 81–124 (ASEC…DETT).

This sequence belongs to the MraZ family. Forms oligomers.

It localises to the cytoplasm. Its subcellular location is the nucleoid. In terms of biological role, negatively regulates its own expression and that of the subsequent genes in the proximal part of the division and cell wall (dcw) gene cluster. Acts by binding directly to DNA. May also regulate the expression of genes outside the dcw cluster. The chain is Transcriptional regulator MraZ from Klebsiella pneumoniae (strain 342).